The primary structure comprises 550 residues: Endonuclease/exonuclease/phosphatase family domain-containing protein 1 (550 aa).

The region spanning 39-68 is the HhH domain; the sequence is ERLNINTATEEELMTLPGVNRGVAQNIVEY. Polar residues predominate over residues 194–213; sequence STNTNGGFTHPSPTSFSVQS. The segment at 194 to 216 is disordered; that stretch reads STNTNGGFTHPSPTSFSVQSDEP.

This Danio rerio (Zebrafish) protein is Endonuclease/exonuclease/phosphatase family domain-containing protein 1 (eepd1).